Here is a 484-residue protein sequence, read N- to C-terminus: Acetyl-coenzyme A carboxylase carboxyl transferase subunit beta, chloroplastic (484 aa).

Residues 223-484 (LWIQCDNCYG…LHAFFPLNKN (262 aa)) enclose the CoA carboxyltransferase N-terminal domain. The Zn(2+) site is built by cysteine 227, cysteine 230, cysteine 243, and cysteine 246. Residues 227–246 (CDNCYGLMYKKVKMNVCEQC) form a C4-type zinc finger.

This sequence belongs to the AccD/PCCB family. Acetyl-CoA carboxylase is a heterohexamer composed of biotin carboxyl carrier protein, biotin carboxylase and 2 subunits each of ACCase subunit alpha and ACCase plastid-coded subunit beta (accD). It depends on Zn(2+) as a cofactor.

The protein resides in the plastid. It is found in the chloroplast stroma. The enzyme catalyses N(6)-carboxybiotinyl-L-lysyl-[protein] + acetyl-CoA = N(6)-biotinyl-L-lysyl-[protein] + malonyl-CoA. Its pathway is lipid metabolism; malonyl-CoA biosynthesis; malonyl-CoA from acetyl-CoA: step 1/1. Its function is as follows. Component of the acetyl coenzyme A carboxylase (ACC) complex. Biotin carboxylase (BC) catalyzes the carboxylation of biotin on its carrier protein (BCCP) and then the CO(2) group is transferred by the transcarboxylase to acetyl-CoA to form malonyl-CoA. The sequence is that of Acetyl-coenzyme A carboxylase carboxyl transferase subunit beta, chloroplastic from Crucihimalaya wallichii (Rock-cress).